We begin with the raw amino-acid sequence, 425 residues long: 2-methylserine hydroxymethyltransferase (425 aa).

(6S)-5,6,7,8-tetrahydrofolate is bound by residues Leu-126 and 130–132 (GHL). Lys-235 carries the post-translational modification N6-(pyridoxal phosphate)lysine. Glu-251 lines the (6S)-5,6,7,8-tetrahydrofolate pocket.

Belongs to the SHMT family. Homodimer. Pyridoxal 5'-phosphate serves as cofactor.

The protein localises to the cytoplasm. The enzyme catalyses (6R)-5,10-methylene-5,6,7,8-tetrahydrofolate + D-alanine + H2O = 2-methylserine + (6S)-5,6,7,8-tetrahydrofolate. It participates in one-carbon metabolism; tetrahydrofolate interconversion. Inhibited by hydroxylamine and sodium borohydride. In terms of biological role, catalyzes the reversible interconversion of alpha-methyl-L-serine to D-alanine with tetrahydrofolate (THF) serving as the one-carbon carrier. Cannot use alpha-methyl-D-serine, L-serine, D-serine or L-alanine. The chain is 2-methylserine hydroxymethyltransferase from Paracoccus sp.